A 148-amino-acid chain; its full sequence is Basic leucine zipper 4 (148 aa).

One can recognise a bZIP domain in the interval 48–97; sequence DDKKRRRTISNRESAKRSRMKKKKRFEELTEEVNRLNIRNQELKNRLANV. The tract at residues 50-70 is disordered; that stretch reads KKRRRTISNRESAKRSRMKKK. The basic motif stretch occupies residues 50–72; the sequence is KKRRRTISNRESAKRSRMKKKKR. The segment at 76 to 90 is leucine-zipper; it reads LTEEVNRLNIRNQEL.

It localises to the nucleus. In terms of biological role, probable transcription factor involved in somatic embryogenesis. Acts as a positive regulator of BHLH109. The sequence is that of Basic leucine zipper 4 from Arabidopsis thaliana (Mouse-ear cress).